Reading from the N-terminus, the 164-residue chain is Nucleotide-binding protein Emin_0136 (164 aa).

Belongs to the YajQ family.

Nucleotide-binding protein. This chain is Nucleotide-binding protein Emin_0136, found in Elusimicrobium minutum (strain Pei191).